The following is a 344-amino-acid chain: Methionine import ATP-binding protein MetN 1 (344 aa).

Positions 2 to 241 (IELRNLSQRF…PHHEVTRALI (240 aa)) constitute an ABC transporter domain. 38–45 (GRSGAGKS) serves as a coordination point for ATP.

Belongs to the ABC transporter superfamily. Methionine importer (TC 3.A.1.24) family. In terms of assembly, the complex is composed of two ATP-binding proteins (MetN), two transmembrane proteins (MetI) and a solute-binding protein (MetQ).

Its subcellular location is the cell inner membrane. It carries out the reaction L-methionine(out) + ATP + H2O = L-methionine(in) + ADP + phosphate + H(+). It catalyses the reaction D-methionine(out) + ATP + H2O = D-methionine(in) + ADP + phosphate + H(+). Its function is as follows. Part of the ABC transporter complex MetNIQ involved in methionine import. Responsible for energy coupling to the transport system. The sequence is that of Methionine import ATP-binding protein MetN 1 from Burkholderia ambifaria (strain ATCC BAA-244 / DSM 16087 / CCUG 44356 / LMG 19182 / AMMD) (Burkholderia cepacia (strain AMMD)).